A 254-amino-acid chain; its full sequence is tRNA (guanine-N(1)-)-methyltransferase (254 aa).

Residues Gly112 and 131-136 each bind S-adenosyl-L-methionine; that span reads IGDYIL.

Belongs to the RNA methyltransferase TrmD family. Homodimer.

The protein resides in the cytoplasm. The enzyme catalyses guanosine(37) in tRNA + S-adenosyl-L-methionine = N(1)-methylguanosine(37) in tRNA + S-adenosyl-L-homocysteine + H(+). Specifically methylates guanosine-37 in various tRNAs. In Sulfurihydrogenibium sp. (strain YO3AOP1), this protein is tRNA (guanine-N(1)-)-methyltransferase.